The primary structure comprises 271 residues: Tryptophan synthase alpha chain (271 aa).

Active-site proton acceptor residues include glutamate 49 and aspartate 60.

The protein belongs to the TrpA family. As to quaternary structure, tetramer of two alpha and two beta chains.

It catalyses the reaction (1S,2R)-1-C-(indol-3-yl)glycerol 3-phosphate + L-serine = D-glyceraldehyde 3-phosphate + L-tryptophan + H2O. It participates in amino-acid biosynthesis; L-tryptophan biosynthesis; L-tryptophan from chorismate: step 5/5. The alpha subunit is responsible for the aldol cleavage of indoleglycerol phosphate to indole and glyceraldehyde 3-phosphate. This Aromatoleum aromaticum (strain DSM 19018 / LMG 30748 / EbN1) (Azoarcus sp. (strain EbN1)) protein is Tryptophan synthase alpha chain.